The following is a 105-amino-acid chain: Large ribosomal subunit protein uL24 (105 aa).

The protein belongs to the universal ribosomal protein uL24 family. In terms of assembly, part of the 50S ribosomal subunit.

Functionally, one of two assembly initiator proteins, it binds directly to the 5'-end of the 23S rRNA, where it nucleates assembly of the 50S subunit. One of the proteins that surrounds the polypeptide exit tunnel on the outside of the subunit. This chain is Large ribosomal subunit protein uL24, found in Staphylococcus epidermidis (strain ATCC 35984 / DSM 28319 / BCRC 17069 / CCUG 31568 / BM 3577 / RP62A).